The sequence spans 142 residues: Phosphoribosyl-AMP cyclohydrolase (142 aa).

Mg(2+) is bound at residue D92. A Zn(2+)-binding site is contributed by C93. The Mg(2+) site is built by D94 and D96. C109 and C116 together coordinate Zn(2+).

This sequence belongs to the PRA-CH family. As to quaternary structure, homodimer. Mg(2+) is required as a cofactor. Zn(2+) serves as cofactor.

The protein resides in the cytoplasm. The catalysed reaction is 1-(5-phospho-beta-D-ribosyl)-5'-AMP + H2O = 1-(5-phospho-beta-D-ribosyl)-5-[(5-phospho-beta-D-ribosylamino)methylideneamino]imidazole-4-carboxamide. Its pathway is amino-acid biosynthesis; L-histidine biosynthesis; L-histidine from 5-phospho-alpha-D-ribose 1-diphosphate: step 3/9. Catalyzes the hydrolysis of the adenine ring of phosphoribosyl-AMP. The chain is Phosphoribosyl-AMP cyclohydrolase from Alcanivorax borkumensis (strain ATCC 700651 / DSM 11573 / NCIMB 13689 / SK2).